A 573-amino-acid polypeptide reads, in one-letter code: Phosphomethylpyrimidine synthase (573 aa).

Substrate contacts are provided by residues Asn-190, Met-219, Tyr-248, His-284, 304 to 306 (SRG), 345 to 348 (DGLR), and Glu-384. His-388 contributes to the Zn(2+) binding site. Tyr-411 serves as a coordination point for substrate. Zn(2+) is bound at residue His-452. [4Fe-4S] cluster contacts are provided by Cys-532, Cys-535, and Cys-540.

The protein belongs to the ThiC family. It depends on [4Fe-4S] cluster as a cofactor.

It catalyses the reaction 5-amino-1-(5-phospho-beta-D-ribosyl)imidazole + S-adenosyl-L-methionine = 4-amino-2-methyl-5-(phosphooxymethyl)pyrimidine + CO + 5'-deoxyadenosine + formate + L-methionine + 3 H(+). Its pathway is cofactor biosynthesis; thiamine diphosphate biosynthesis. Its function is as follows. Catalyzes the synthesis of the hydroxymethylpyrimidine phosphate (HMP-P) moiety of thiamine from aminoimidazole ribotide (AIR) in a radical S-adenosyl-L-methionine (SAM)-dependent reaction. This is Phosphomethylpyrimidine synthase from Geobacillus sp. (strain WCH70).